The sequence spans 174 residues: Large ribosomal subunit protein uL15 (174 aa).

Disordered regions lie at residues 1-57 (MKLH…QMRI) and 147-174 (PWVVERRSRSRGPNPPRHSRKAETPQKA). Residues 21-35 (RGIGSGKGKTGGKGM) show a composition bias toward gly residues.

The protein belongs to the universal ribosomal protein uL15 family. As to quaternary structure, part of the 50S ribosomal subunit.

Binds to the 23S rRNA. This chain is Large ribosomal subunit protein uL15, found in Roseiflexus sp. (strain RS-1).